The chain runs to 120 residues: MAKYRAGRINEEVKKEVSNIIHNDIKDPRLSAMVSVTDVDVTKDLKYAKVYVSIFGNEKAKEESLQALKSSVGFIRKEIGRRVKLRNTPEVIIEVDNSIERGMHIDELLHSIKENESNDN.

Belongs to the RbfA family. As to quaternary structure, monomer. Binds 30S ribosomal subunits, but not 50S ribosomal subunits or 70S ribosomes.

It localises to the cytoplasm. In terms of biological role, one of several proteins that assist in the late maturation steps of the functional core of the 30S ribosomal subunit. Associates with free 30S ribosomal subunits (but not with 30S subunits that are part of 70S ribosomes or polysomes). Required for efficient processing of 16S rRNA. May interact with the 5'-terminal helix region of 16S rRNA. The polypeptide is Ribosome-binding factor A (Clostridium botulinum (strain Okra / Type B1)).